Reading from the N-terminus, the 59-residue chain is MAKTIKITQTRSAIGRLPKHKATLLGLGLRRIGHTVEREDTPAVRGMVNAVYFMVKVEE.

The protein belongs to the universal ribosomal protein uL30 family. As to quaternary structure, part of the 50S ribosomal subunit.

The protein is Large ribosomal subunit protein uL30 of Enterobacter sp. (strain 638).